A 751-amino-acid polypeptide reads, in one-letter code: Protein WEAK CHLOROPLAST MOVEMENT UNDER BLUE LIGHT-like 3 (751 aa).

Residue Ser-113 is modified to Phosphoserine. Coiled coils occupy residues 165-558 (ERRK…ALQE) and 588-647 (QALE…KARD). 2 stretches are compositionally biased toward basic and acidic residues: residues 455 to 467 (RERQ…KQKE) and 625 to 689 (NREM…RNKE). Disordered stretches follow at residues 455–479 (RERQ…DKDA) and 625–751 (NREM…HSHK). Residues 704–723 (GSSSNNTGGSTTTNNNNLTP) show a composition bias toward low complexity.

Belongs to the WEB family.

This is Protein WEAK CHLOROPLAST MOVEMENT UNDER BLUE LIGHT-like 3 (WEL3) from Arabidopsis thaliana (Mouse-ear cress).